The primary structure comprises 93 residues: uncharacterized protein (93 aa).

One can recognise a TRAM domain in the interval 24–85; sequence QLQVGDTLKL…IQTQVGRLFF (62 aa).

It belongs to the ycf81 family.

This is an uncharacterized protein from Thermus thermophilus.